The primary structure comprises 1340 residues: Early transcription factor large subunit homolog (1340 aa).

This sequence belongs to the asfivirus G1340L family.

The protein localises to the virion. Putative initation factor. The protein is Early transcription factor large subunit homolog of African swine fever virus (isolate Tick/South Africa/Pretoriuskop Pr4/1996) (ASFV).